A 552-amino-acid polypeptide reads, in one-letter code: FERRY endosomal RAB5 effector complex subunit 3 (552 aa).

Residues 383–403 (LKESLDSGNQNGGNDDKTKNA) form a disordered region.

Component of the FERRY complex composed of five subunits, TBCK, PPP1R21, FERRY3, CRYZL1 and GATD1 with a ratio of 1:2:1:2:4, respectively.

It is found in the cytoplasm. Its subcellular location is the early endosome. In terms of biological role, component of the FERRY complex (Five-subunit Endosomal Rab5 and RNA/ribosome intermediary). The FERRY complex directly interacts with mRNAs and RAB5A, and functions as a RAB5A effector involved in the localization and the distribution of specific mRNAs most likely by mediating their endosomal transport. The complex recruits mRNAs and ribosomes to early endosomes through direct mRNA-interaction. Plays a role in mast cell degranulation. The polypeptide is FERRY endosomal RAB5 effector complex subunit 3 (Pongo abelii (Sumatran orangutan)).